The sequence spans 355 residues: Carbohydrate sulfotransferase 10 (355 aa).

The Cytoplasmic portion of the chain corresponds to 1–6 (MHHRWL). The chain crosses the membrane as a helical; Signal-anchor for type II membrane protein span at residues 7–27 (LLVACFWVLFMLMVASKLITL). Topologically, residues 28–355 (TMKDPEGYGN…FGYKEPTFLF (328 aa)) are lumenal. N-linked (GlcNAc...) asparagine glycosylation is found at Asn93 and Asn98. Residues 126-132 (PKVGNTQ) and 188-196 (RDPFERLIS) contribute to the 3'-phosphoadenylyl sulfate site. An N-linked (GlcNAc...) asparagine glycan is attached at Asn316.

Belongs to the sulfotransferase 2 family.

The protein localises to the golgi apparatus membrane. Catalyzes the transfer of sulfate to position 3 of terminal glucuronic acid of both protein- and lipid-linked oligosaccharides. Participates in biosynthesis of HNK-1 carbohydrate structure, a sulfated glucuronyl-lactosaminyl residue carried by many neural recognition molecules. The protein is Carbohydrate sulfotransferase 10 (chst10) of Xenopus laevis (African clawed frog).